The sequence spans 436 residues: MTQTAAPGRVQTLTKEQEKVLKQVWVHLFQFWGIDVDGSAVLTAKEPEPAAPSGKGRKLLGLFGKRKDATGAARKESNGKAAAKVYDAEKVEDSDAEKEKPTPQKVEGLEEMYELLKELDGAAVSKEFWSMLRCDYPDNLLLRFVRARKWDINKAMIMMAHSLRWRLNEGKPEDIVFGGERGAQKADKKGIVKQLELGKATVRGFDKNGCPIVYVRPRLHHAADQTEAETSEYSLLIIEQARLFLKEPCDTATILFDLSGFSMANMDYAPVKFLITCFEAHYPECLGKLFIHKAPWIFPPIWNIIKNWLDPVVAAKIAFTKTAADLEEFIPAEQIPLELGGKDEYNFDGFVMPDGSADTKLSDEKGKAAVLEEREAIIKRFIDATISWIESTSDEESAKWLEKKIDLSKELSENYSKLDPYIRSRSFYDVNGTLKV.

Residues 85 to 104 form a disordered region; the sequence is VYDAEKVEDSDAEKEKPTPQ. The span at 86–102 shows a compositional bias: basic and acidic residues; sequence YDAEKVEDSDAEKEKPT. In terms of domain architecture, CRAL-TRIO spans 188 to 347; the sequence is KKGIVKQLEL…ELGGKDEYNF (160 aa).

This sequence belongs to the PITP family. Binds phosphatidylinositol (PtdIns).

Its subcellular location is the cytoplasm. It localises to the endosome. Its function is as follows. Non-classical phosphatidylinositol (PtdIns) transfer protein (PITP), which exhibits PtdIns-binding/transfer activity in the absence of detectable PtdCho-binding/transfer activity. May also regulate post-Golgi membrane-trafficking events and have a role resistance to oxidative stress. The polypeptide is Phosphatidylinositol transfer protein CSR1 (CSR1) (Eremothecium gossypii (strain ATCC 10895 / CBS 109.51 / FGSC 9923 / NRRL Y-1056) (Yeast)).